Consider the following 246-residue polypeptide: Putative KilA-N domain-containing protein L33 (246 aa).

The KilA-N domain occupies 20–129 (RYTKCQYCDI…AKVSLWIEEW (110 aa)).

This is Putative KilA-N domain-containing protein L33 from Acanthamoeba polyphaga mimivirus (APMV).